A 579-amino-acid polypeptide reads, in one-letter code: Protein inscuteable homolog (579 aa).

Positions 74 to 89 are important for interaction with GPSM2; sequence SVQRWMEDLKLMTECE. The short motif at 576–579 is the PDZ-binding element; the sequence is ESFV.

Interacts with ALS2CR19/PAR3B and F2RL2/PAR3. Interacts with GPSM1/AGS3 and GPSM2/LGN (via TPR repeat region). Identified in a complex with GPSM2 and F2RL2. In terms of tissue distribution, isoform 1 is expressed in various tissues with stronger expression in liver, kidney and small intestine. Isoform 2 is abundantly expressed in small intestine and to a lower extent in lung and pancreas.

It is found in the cytoplasm. The protein localises to the cell cortex. In terms of biological role, may function as an adapter linking the Par3 complex to the GPSM1/GPSM2 complex. Involved in spindle orientation during mitosis. May regulate cell proliferation and differentiation in the developing nervous system. May play a role in the asymmetric division of fibroblasts and participate in the process of stratification of the squamous epithelium. The polypeptide is Protein inscuteable homolog (INSC) (Homo sapiens (Human)).